The following is a 275-amino-acid chain: Transcription factor JUNGBRUNNEN 1 (275 aa).

The tract at residues 1-24 is disordered; it reads MSGEGNLGKDHEEENEAPLPGFRF. Residues 18–167 form the NAC domain; that stretch reads PLPGFRFHPT…VWTLCRIFKR (150 aa). The DNA-binding element occupies 115–173; the sequence is VGLKKSLVYYLGSAGKGTKTDWMMHEFRLPSTTKTDSPAQQAEVWTLCRIFKRVTSQRN. The disordered stretch occupies residues 191 to 219; the sequence is CSKTSSLDSDHTSHRTVDSMSHEPPLPQP. Basic and acidic residues predominate over residues 198-211; it reads DSDHTSHRTVDSMS.

In terms of tissue distribution, expressed in roots, root caps, cotyledons, tips and margin of young leaves, senescent regions of fully expanded leaves and floral tissues, including old sepals, petals, staments, mature anthers and pollen grains. Not detected in the abscission zone of open flowers, emerging lateral roots and root meristematic zones.

It localises to the nucleus. Transcription factor that binds to the 5'- RRYGCCGT-3' consensus core sequence. Central longevity regulator. Negative regulator of leaf senescence. Modulates cellular H(2)O(2) levels and enhances tolerance to various abiotic stresses through the regulation of DREB2A. This is Transcription factor JUNGBRUNNEN 1 (JUB1) from Arabidopsis thaliana (Mouse-ear cress).